Reading from the N-terminus, the 400-residue chain is Axin-like protein 1 (400 aa).

The region spanning 4-132 is the RGS domain; sequence RSKFSIDRVL…TTTADVNTTW (129 aa). Disordered stretches follow at residues 190 to 233 and 278 to 306; these read QETK…TLKV and GTLERPNRLFTGTNNGFSTLQPKRRGSEA. Residues 194-210 are compositionally biased toward basic and acidic residues; the sequence is NSSETEEHAESPRKEKS. The span at 287–298 shows a compositional bias: polar residues; it reads FTGTNNGFSTLQ. The DIX domain occupies 305 to 392; the sequence is EAPKMTVELR…RITAICRMCP (88 aa).

As to quaternary structure, interacts with bar-1, dsh-2, gsk-3, and mig-5.

In terms of biological role, works in parallel with pry-1 in negatively regulating bar-1 signaling in vulval precursor cells and Q neuroblasts. Shown to have a role in excretory cell development. This Caenorhabditis elegans protein is Axin-like protein 1.